A 1240-amino-acid chain; its full sequence is DNA-directed RNA polymerase subunit beta (1240 aa).

The protein belongs to the RNA polymerase beta chain family. The RNAP catalytic core consists of 2 alpha, 1 beta, 1 beta' and 1 omega subunit. When a sigma factor is associated with the core the holoenzyme is formed, which can initiate transcription.

The catalysed reaction is RNA(n) + a ribonucleoside 5'-triphosphate = RNA(n+1) + diphosphate. Its function is as follows. DNA-dependent RNA polymerase catalyzes the transcription of DNA into RNA using the four ribonucleoside triphosphates as substrates. This chain is DNA-directed RNA polymerase subunit beta, found in Rhodopirellula baltica (strain DSM 10527 / NCIMB 13988 / SH1).